The sequence spans 356 residues: Nicotinate-nucleotide--dimethylbenzimidazole phosphoribosyltransferase (356 aa).

E317 acts as the Proton acceptor in catalysis.

This sequence belongs to the CobT family. In terms of assembly, homodimer.

It catalyses the reaction 5,6-dimethylbenzimidazole + nicotinate beta-D-ribonucleotide = alpha-ribazole 5'-phosphate + nicotinate + H(+). Its pathway is nucleoside biosynthesis; alpha-ribazole biosynthesis; alpha-ribazole from 5,6-dimethylbenzimidazole: step 1/2. In terms of biological role, catalyzes the synthesis of alpha-ribazole-5'-phosphate from nicotinate mononucleotide (NAMN) and 5,6-dimethylbenzimidazole (DMB). In Salmonella paratyphi C (strain RKS4594), this protein is Nicotinate-nucleotide--dimethylbenzimidazole phosphoribosyltransferase.